The chain runs to 61 residues: Cytotoxin 3 (61 aa).

Cystine bridges form between cysteine 3/cysteine 22, cysteine 15/cysteine 39, cysteine 43/cysteine 54, and cysteine 55/cysteine 60.

Belongs to the three-finger toxin family. Short-chain subfamily. Type IB cytotoxin sub-subfamily. In terms of tissue distribution, expressed by the venom gland.

The protein localises to the secreted. This protein lyses red blood cells and has cardiotoxic and hypotensive activities. The chain is Cytotoxin 3 from Hemachatus haemachatus (Rinkhals).